The chain runs to 200 residues: Potassium-transporting ATPase KdpC subunit (200 aa).

Residues 6-26 (PAVVLLILLTLITGIAYPLLT) traverse the membrane as a helical segment.

The protein belongs to the KdpC family. The system is composed of three essential subunits: KdpA, KdpB and KdpC.

It localises to the cell inner membrane. Its function is as follows. Part of the high-affinity ATP-driven potassium transport (or Kdp) system, which catalyzes the hydrolysis of ATP coupled with the electrogenic transport of potassium into the cytoplasm. This subunit acts as a catalytic chaperone that increases the ATP-binding affinity of the ATP-hydrolyzing subunit KdpB by the formation of a transient KdpB/KdpC/ATP ternary complex. This is Potassium-transporting ATPase KdpC subunit from Yersinia enterocolitica serotype O:8 / biotype 1B (strain NCTC 13174 / 8081).